Consider the following 447-residue polypeptide: Kynurenine 3-monooxygenase (447 aa).

It belongs to the aromatic-ring hydroxylase family. KMO subfamily. FAD is required as a cofactor.

The catalysed reaction is L-kynurenine + NADPH + O2 + H(+) = 3-hydroxy-L-kynurenine + NADP(+) + H2O. It functions in the pathway cofactor biosynthesis; NAD(+) biosynthesis; quinolinate from L-kynurenine: step 1/3. Functionally, catalyzes the hydroxylation of L-kynurenine (L-Kyn) to form 3-hydroxy-L-kynurenine (L-3OHKyn). Required for synthesis of quinolinic acid. The protein is Kynurenine 3-monooxygenase of Christiangramia forsetii (strain DSM 17595 / CGMCC 1.15422 / KT0803) (Gramella forsetii).